Reading from the N-terminus, the 241-residue chain is ATP synthase subunit a (241 aa).

5 consecutive transmembrane segments (helical) span residues 30–50, 91–111, 128–148, 193–213, and 214–234; these read GQVF…ISLG, FIGT…LIPW, INTT…AGLS, LVVG…VMFL, and GLFT…YYIG.

This sequence belongs to the ATPase A chain family. In terms of assembly, F-type ATPases have 2 components, CF(1) - the catalytic core - and CF(0) - the membrane proton channel. CF(1) has five subunits: alpha(3), beta(3), gamma(1), delta(1), epsilon(1). CF(0) has four main subunits: a, b, b' and c.

The protein localises to the cellular thylakoid membrane. Its function is as follows. Key component of the proton channel; it plays a direct role in the translocation of protons across the membrane. The sequence is that of ATP synthase subunit a from Prochlorococcus marinus (strain MIT 9515).